Reading from the N-terminus, the 109-residue chain is Large ribosomal subunit protein uL24 (109 aa).

This sequence belongs to the universal ribosomal protein uL24 family. In terms of assembly, part of the 50S ribosomal subunit.

Functionally, one of two assembly initiator proteins, it binds directly to the 5'-end of the 23S rRNA, where it nucleates assembly of the 50S subunit. One of the proteins that surrounds the polypeptide exit tunnel on the outside of the subunit. The protein is Large ribosomal subunit protein uL24 of Legionella pneumophila (strain Corby).